Consider the following 215-residue polypeptide: 3-isopropylmalate dehydratase small subunit (215 aa).

The protein belongs to the LeuD family. LeuD type 1 subfamily. As to quaternary structure, heterodimer of LeuC and LeuD.

It carries out the reaction (2R,3S)-3-isopropylmalate = (2S)-2-isopropylmalate. It participates in amino-acid biosynthesis; L-leucine biosynthesis; L-leucine from 3-methyl-2-oxobutanoate: step 2/4. Its function is as follows. Catalyzes the isomerization between 2-isopropylmalate and 3-isopropylmalate, via the formation of 2-isopropylmaleate. The sequence is that of 3-isopropylmalate dehydratase small subunit from Ectopseudomonas mendocina (strain ymp) (Pseudomonas mendocina).